Reading from the N-terminus, the 258-residue chain is Cytochrome P450 1A2 (258 aa).

It belongs to the cytochrome P450 family. The cofactor is heme.

The protein resides in the endoplasmic reticulum membrane. It is found in the microsome membrane. The enzyme catalyses an organic molecule + reduced [NADPH--hemoprotein reductase] + O2 = an alcohol + oxidized [NADPH--hemoprotein reductase] + H2O + H(+). Cytochromes P450 are a group of heme-thiolate monooxygenases. In liver microsomes, this enzyme is involved in an NADPH-dependent electron transport pathway. It oxidizes a variety of structurally unrelated compounds, including steroids, fatty acids, and xenobiotics. In Gallus gallus (Chicken), this protein is Cytochrome P450 1A2 (CYP1A2).